The following is a 127-amino-acid chain: Protein FAM229A (127 aa).

Residues 1 to 96 (MLPSSTPGPG…ATEHNPVRPL (96 aa)) form a disordered region. The span at 24 to 39 (RSPAARAPAAASSLGP) shows a compositional bias: low complexity.

This sequence belongs to the FAM229 family.

The protein is Protein FAM229A (FAM229A) of Homo sapiens (Human).